Here is a 692-residue protein sequence, read N- to C-terminus: Protein arginine N-methyltransferase 7 (692 aa).

SAM-dependent MTase PRMT-type domains follow at residues 14–345 (SLEW…YCVW) and 358–684 (EVYQ…ITME). R32 carries the omega-N-methylarginine modification. Active-site residues include E144 and E153.

This sequence belongs to the class I-like SAM-binding methyltransferase superfamily. Protein arginine N-methyltransferase family. PRMT7 subfamily. Interacts with CTCFL, PRMT5 and SNRPD3. Homodimer and heterodimer.

Its subcellular location is the cytoplasm. The protein resides in the nucleus. It carries out the reaction L-arginyl-[protein] + S-adenosyl-L-methionine = N(omega)-methyl-L-arginyl-[protein] + S-adenosyl-L-homocysteine + H(+). In terms of biological role, arginine methyltransferase that can both catalyze the formation of omega-N monomethylarginine (MMA) and symmetrical dimethylarginine (sDMA), with a preference for the formation of MMA. Specifically mediates the symmetrical dimethylation of arginine residues in the small nuclear ribonucleoproteins Sm D1 (SNRPD1) and Sm D3 (SNRPD3); such methylation being required for the assembly and biogenesis of snRNP core particles. Specifically mediates the symmetric dimethylation of histone H4 'Arg-3' to form H4R3me2s. Plays a role in gene imprinting by being recruited by CTCFL at the H19 imprinted control region (ICR) and methylating histone H4 to form H4R3me2s, possibly leading to recruit DNA methyltransferases at these sites. May also play a role in embryonic stem cell (ESC) pluripotency. Also able to mediate the arginine methylation of histone H2A and myelin basic protein (MBP) in vitro; the relevance of such results is however unclear in vivo. The sequence is that of Protein arginine N-methyltransferase 7 (Prmt7) from Cricetulus longicaudatus (Long-tailed dwarf hamster).